A 238-amino-acid polypeptide reads, in one-letter code: Ribonuclease PH (238 aa).

Phosphate contacts are provided by residues Arg-86 and 124–126 (GTR).

Belongs to the RNase PH family. In terms of assembly, homohexameric ring arranged as a trimer of dimers.

It catalyses the reaction tRNA(n+1) + phosphate = tRNA(n) + a ribonucleoside 5'-diphosphate. Functionally, phosphorolytic 3'-5' exoribonuclease that plays an important role in tRNA 3'-end maturation. Removes nucleotide residues following the 3'-CCA terminus of tRNAs; can also add nucleotides to the ends of RNA molecules by using nucleoside diphosphates as substrates, but this may not be physiologically important. Probably plays a role in initiation of 16S rRNA degradation (leading to ribosome degradation) during starvation. In Brucella abortus (strain S19), this protein is Ribonuclease PH.